A 411-amino-acid chain; its full sequence is Serine/threonine transporter SstT (411 aa).

8 consecutive transmembrane segments (helical) span residues 17 to 37 (IMVG…TASA), 41 to 61 (LGAL…LVLV), 79 to 99 (ILFL…VVSF), 138 to 158 (ALIS…GLAL), 189 to 209 (LGIF…ALWG), 214 to 234 (LVVL…LIVF), 295 to 315 (MAGA…TLGI), and 327 to 347 (VVAA…LLLI).

It belongs to the dicarboxylate/amino acid:cation symporter (DAACS) (TC 2.A.23) family.

The protein localises to the cell inner membrane. The catalysed reaction is L-serine(in) + Na(+)(in) = L-serine(out) + Na(+)(out). The enzyme catalyses L-threonine(in) + Na(+)(in) = L-threonine(out) + Na(+)(out). Involved in the import of serine and threonine into the cell, with the concomitant import of sodium (symport system). The polypeptide is Serine/threonine transporter SstT (Serratia proteamaculans (strain 568)).